The sequence spans 331 residues: MLIKKTLRAALAGDDIPRSEITPRAVFEHRRRILQAAGAAAAGGLVGAHGLALAAYASPDATARKLAAPANPKFVVPEKVTSFKDITTYNNFYEFGTDKSDPARRAGTLRPHPWRVSVEGEVRNPKVYDIDALLKLAPLEERVYRLRCVEGWSMVIPWIGFPLAELIKRVEPTANAKYVQFVTLADPSQMPGLSAPILDWPYSEGLRMDEAMNPLTLLTIGVYGQVLPNQNGAPVRVIVPWKYGFKSAKSIVKIRFVDRQPPTSWNTYAPNEYGFYSNVNPNVDHPRWSQATERRIGEDGFFTPKRKTLMFNGYGDWVASMYRGMDLKKYF.

Residues 1-57 constitute a signal peptide (tat-type signal); that stretch reads MLIKKTLRAALAGDDIPRSEITPRAVFEHRRRILQAAGAAAAGGLVGAHGLALAAYA. Residues N90, 93–94, C148, T183, N231, R236, and 247–249 each bind Mo-molybdopterin; these read YE and SAK.

It belongs to the MsrP family. As to quaternary structure, heterodimer of a catalytic subunit (MsrP) and a heme-binding subunit (MsrQ). Requires Mo-molybdopterin as cofactor. In terms of processing, predicted to be exported by the Tat system. The position of the signal peptide cleavage has not been experimentally proven.

It is found in the periplasm. It catalyses the reaction L-methionyl-[protein] + a quinone + H2O = L-methionyl-(S)-S-oxide-[protein] + a quinol. The catalysed reaction is L-methionyl-[protein] + a quinone + H2O = L-methionyl-(R)-S-oxide-[protein] + a quinol. Its function is as follows. Part of the MsrPQ system that repairs oxidized periplasmic proteins containing methionine sulfoxide residues (Met-O), using respiratory chain electrons. Thus protects these proteins from oxidative-stress damage caused by reactive species of oxygen and chlorine generated by the host defense mechanisms. MsrPQ is essential for the maintenance of envelope integrity under bleach stress, rescuing a wide series of structurally unrelated periplasmic proteins from methionine oxidation. The catalytic subunit MsrP is non-stereospecific, being able to reduce both (R-) and (S-) diastereoisomers of methionine sulfoxide. This is Protein-methionine-sulfoxide reductase catalytic subunit MsrP from Burkholderia mallei (strain ATCC 23344).